Reading from the N-terminus, the 590-residue chain is Aspartate--tRNA(Asp/Asn) ligase (590 aa).

Residue Glu-176 participates in L-aspartate binding. The interval 200 to 203 (QLFK) is aspartate. Positions 222 and 451 each coordinate L-aspartate. Position 222 to 224 (222 to 224 (RDE)) interacts with ATP. Position 485 (Glu-485) interacts with ATP. Position 492 (Arg-492) interacts with L-aspartate. An ATP-binding site is contributed by 537–540 (GIDR).

Belongs to the class-II aminoacyl-tRNA synthetase family. Type 1 subfamily. In terms of assembly, homodimer.

The protein resides in the cytoplasm. It carries out the reaction tRNA(Asx) + L-aspartate + ATP = L-aspartyl-tRNA(Asx) + AMP + diphosphate. Aspartyl-tRNA synthetase with relaxed tRNA specificity since it is able to aspartylate not only its cognate tRNA(Asp) but also tRNA(Asn). Reaction proceeds in two steps: L-aspartate is first activated by ATP to form Asp-AMP and then transferred to the acceptor end of tRNA(Asp/Asn). This Ehrlichia ruminantium (strain Gardel) protein is Aspartate--tRNA(Asp/Asn) ligase.